Reading from the N-terminus, the 188-residue chain is Elongation factor P (188 aa).

Lys34 carries the N6-(3,6-diaminohexanoyl)-5-hydroxylysine modification.

The protein belongs to the elongation factor P family. Post-translationally, may be beta-lysylated on the epsilon-amino group of Lys-34 by the combined action of EpmA and EpmB, and then hydroxylated on the C5 position of the same residue by EpmC (if this protein is present). Lysylation is critical for the stimulatory effect of EF-P on peptide-bond formation. The lysylation moiety may extend toward the peptidyltransferase center and stabilize the terminal 3-CCA end of the tRNA. Hydroxylation of the C5 position on Lys-34 may allow additional potential stabilizing hydrogen-bond interactions with the P-tRNA.

Its subcellular location is the cytoplasm. It functions in the pathway protein biosynthesis; polypeptide chain elongation. In terms of biological role, involved in peptide bond synthesis. Alleviates ribosome stalling that occurs when 3 or more consecutive Pro residues or the sequence PPG is present in a protein, possibly by augmenting the peptidyl transferase activity of the ribosome. Modification of Lys-34 is required for alleviation. The sequence is that of Elongation factor P from Yersinia pseudotuberculosis serotype O:1b (strain IP 31758).